The sequence spans 250 residues: ATP synthase subunit a (250 aa).

5 helical membrane passes run 27–47 (TDTV…AFYL), 83–103 (IAPF…ISNW), 129–149 (INYV…AGIW), 191–211 (IFAG…IMWA), and 219–239 (FDLF…ILYF).

The protein belongs to the ATPase A chain family. F-type ATPases have 2 components, CF(1) - the catalytic core - and CF(0) - the membrane proton channel. CF(1) has five subunits: alpha(3), beta(3), gamma(1), delta(1), epsilon(1). CF(0) has three main subunits: a(1), b(2) and c(9-12). The alpha and beta chains form an alternating ring which encloses part of the gamma chain. CF(1) is attached to CF(0) by a central stalk formed by the gamma and epsilon chains, while a peripheral stalk is formed by the delta and b chains.

The protein localises to the cell membrane. Key component of the proton channel; it plays a direct role in the translocation of protons across the membrane. The polypeptide is ATP synthase subunit a (Mycobacterium marinum (strain ATCC BAA-535 / M)).